Consider the following 689-residue polypeptide: Elongation factor G 1 (689 aa).

The tr-type G domain maps to 7–282; that stretch reads DQVRTIGIIS…AVVDFLPSPL (276 aa). Residues 16-23, 80-84, and 134-137 each bind GTP; these read SHIDAGKT, DTPGH, and NKMD.

The protein belongs to the TRAFAC class translation factor GTPase superfamily. Classic translation factor GTPase family. EF-G/EF-2 subfamily.

Its subcellular location is the cytoplasm. Catalyzes the GTP-dependent ribosomal translocation step during translation elongation. During this step, the ribosome changes from the pre-translocational (PRE) to the post-translocational (POST) state as the newly formed A-site-bound peptidyl-tRNA and P-site-bound deacylated tRNA move to the P and E sites, respectively. Catalyzes the coordinated movement of the two tRNA molecules, the mRNA and conformational changes in the ribosome. The chain is Elongation factor G 1 from Geobacter sulfurreducens (strain ATCC 51573 / DSM 12127 / PCA).